A 404-amino-acid polypeptide reads, in one-letter code: Agnestins biosynthesis cluster transcription factor AgnL10 (404 aa).

A DNA-binding region (zn(2)-C6 fungal-type) is located at residues 23–50; the sequence is CNRCAVSKIKCSKEKPACARCAKQDKVC. Disordered stretches follow at residues 54–83, 188–209, and 294–318; these read ATKR…PTAA, ASAS…PSSG, and PGPD…AGVD. Residues 57 to 68 show a composition bias toward basic residues; sequence RAGRKRGSRRHN. Residues 74-83 are compositionally biased toward polar residues; that stretch reads PTTQDLPTAA. Residues 188–197 show a composition bias toward low complexity; sequence ASASSMDPAA.

It is found in the nucleus. In terms of biological role, transcription factor that regulates the expression of the gene cluster that mediates the biosynthesis of agnestins, dihydroxy-xanthone metabolites. In Paecilomyces divaricatus (Penicillium divaricatum), this protein is Agnestins biosynthesis cluster transcription factor AgnL10.